A 317-amino-acid chain; its full sequence is MTTALDQLKQYTTVVADTGDFQQLAQYKPQDATTNPSLILKAVQKDDYKPLLEKTVKAHASKPVGAIIDQLLIAFGTEILKIIPGRVSTEVDARLSFDTEASIAKGRELIALYKEHGIGRERVLIKLASTWEGVRAAEVLQKEGIHCNMTLLFSLAQAAACAEAGAQLISPFVGRIYDWYKKNAGSAWDEAKDGGANDPGVKSVRRIYAYYKKFGYKTEVMGASFRTPGQILELAGCDLLTISPDLLQKLQESTEKVERKLSPDSAKDADIERVPVDEASFRFLVNDEAMATEKLAEGIRAFAADAVKLEKLIEALR.

Lys126 acts as the Schiff-base intermediate with substrate in catalysis.

It belongs to the transaldolase family. Type 1 subfamily. As to quaternary structure, homodimer.

The protein localises to the cytoplasm. It carries out the reaction D-sedoheptulose 7-phosphate + D-glyceraldehyde 3-phosphate = D-erythrose 4-phosphate + beta-D-fructose 6-phosphate. The protein operates within carbohydrate degradation; pentose phosphate pathway; D-glyceraldehyde 3-phosphate and beta-D-fructose 6-phosphate from D-ribose 5-phosphate and D-xylulose 5-phosphate (non-oxidative stage): step 2/3. Functionally, transaldolase is important for the balance of metabolites in the pentose-phosphate pathway. This Paraburkholderia phytofirmans (strain DSM 17436 / LMG 22146 / PsJN) (Burkholderia phytofirmans) protein is Transaldolase.